Consider the following 367-residue polypeptide: Phosphoribosylaminoimidazole-succinocarboxamide synthase (367 aa).

The protein belongs to the SAICAR synthetase family.

The enzyme catalyses 5-amino-1-(5-phospho-D-ribosyl)imidazole-4-carboxylate + L-aspartate + ATP = (2S)-2-[5-amino-1-(5-phospho-beta-D-ribosyl)imidazole-4-carboxamido]succinate + ADP + phosphate + 2 H(+). The protein operates within purine metabolism; IMP biosynthesis via de novo pathway; 5-amino-1-(5-phospho-D-ribosyl)imidazole-4-carboxamide from 5-amino-1-(5-phospho-D-ribosyl)imidazole-4-carboxylate: step 1/2. The sequence is that of Phosphoribosylaminoimidazole-succinocarboxamide synthase from Aliivibrio salmonicida (strain LFI1238) (Vibrio salmonicida (strain LFI1238)).